A 363-amino-acid chain; its full sequence is Uptake hydrogenase small subunit (363 aa).

The segment at residues 1-46 (MGAATETFYSVIRRQGITRRSFHKFCSLTATSLGLGPLAASRIANA) is a signal peptide (tat-type signal). The [4Fe-4S] cluster site is built by C63, C66, C161, C195, H233, C236, C261, and C267. Residues C276, C295, and C298 each contribute to the [3Fe-4S] cluster site.

The protein belongs to the [NiFe]/[NiFeSe] hydrogenase small subunit family. In terms of assembly, heterodimer of a large and a small subunit. [4Fe-4S] cluster is required as a cofactor. [3Fe-4S] cluster serves as cofactor. In terms of processing, predicted to be exported by the Tat system. The position of the signal peptide cleavage has not been experimentally proven.

The protein resides in the cell membrane. The enzyme catalyses H2 + A = AH2. In terms of biological role, this enzyme recycles the H(2) produced by nitrogenase to increase the production of ATP and to protect nitrogenase against inhibition or damage by O(2) under carbon- or phosphate-limited conditions. This is Uptake hydrogenase small subunit (hupA) from Bradyrhizobium diazoefficiens (strain JCM 10833 / BCRC 13528 / IAM 13628 / NBRC 14792 / USDA 110).